The primary structure comprises 246 residues: MADS-box transcription factor 14 (246 aa).

Residues 1 to 61 (MGRGKVQLKR…GKLYKYATDS (61 aa)) form the MADS-box domain. The 91-residue stretch at 88–178 (QGNWCHEYRK…QKELVEKQKV (91 aa)) folds into the K-box domain. Residues 180–199 (KQQVQWDQTQPQTSSSSSSF) form a disordered region.

As to expression, highly expressed in sterile lemmas, at intermediate levels in stamens, and weakly in lemmas, paleas and carpels.

The protein localises to the nucleus. Probable transcription factor. This chain is MADS-box transcription factor 14 (MADS14), found in Oryza sativa subsp. indica (Rice).